The sequence spans 507 residues: RNA demethylase ALKBH9B (507 aa).

2 disordered regions span residues 76–102 (GSER…DNHS) and 145–183 (QEDE…LSRD). Residues 89 to 100 (DEKSENGEDCDN) show a composition bias toward basic and acidic residues. Residues 145 to 160 (QEDEFDEEEEEEEEER) show a composition bias toward acidic residues. Residues 174-183 (TPEKPKLSRD) show a composition bias toward basic and acidic residues. The 98-residue stretch at 317–414 (VPDSCIVNIY…RISITFRKMD (98 aa)) folds into the Fe2OG dioxygenase domain. Histidine 335, aspartate 337, and histidine 396 together coordinate Fe cation. A 2-oxoglutarate-binding site is contributed by arginine 405. Residues 432-507 (EPLPLDLNRS…MPRPSRRNYG (76 aa)) are disordered. The span at 440–450 (RSGSTSRFSRL) shows a compositional bias: polar residues. Basic residues predominate over residues 497–507 (GMPRPSRRNYG).

This sequence belongs to the alkB family. In terms of assembly, (Microbial infection) Interacts with the capsid protein ORF3b of the alfalfa mosaic virus (AMV). Fe(2+) serves as cofactor.

Its subcellular location is the cytoplasm. The protein localises to the P-body. The protein resides in the cytoplasmic granule. The catalysed reaction is an N(6)-methyladenosine in mRNA + 2-oxoglutarate + O2 = an adenosine in mRNA + formaldehyde + succinate + CO2. Its function is as follows. Dioxygenase that demethylates RNA by oxidative demethylation: specifically demethylates N(6)-methyladenosine (m6A) RNA, the most prevalent internal modification of messenger RNA (mRNA) in higher eukaryotes. Modulates viral infection of the alfalfa mosaic virus (AMV) and the m6A abundance in its genomic RNAs. In Arabidopsis thaliana (Mouse-ear cress), this protein is RNA demethylase ALKBH9B.